A 60-amino-acid polypeptide reads, in one-letter code: Large ribosomal subunit protein uL30 (60 aa).

The protein belongs to the universal ribosomal protein uL30 family. As to quaternary structure, part of the 50S ribosomal subunit.

The protein is Large ribosomal subunit protein uL30 of Dehalococcoides mccartyi (strain ATCC BAA-2266 / KCTC 15142 / 195) (Dehalococcoides ethenogenes (strain 195)).